A 150-amino-acid polypeptide reads, in one-letter code: Lymphotoxin-beta (150 aa).

The region spanning 1–149 (AWITGQGLGW…GKTFFGAVMV (149 aa)) is the THD domain. N-linked (GlcNAc...) asparagine glycosylation occurs at asparagine 128.

This sequence belongs to the tumor necrosis factor family. As to quaternary structure, heterotrimer of either two LTB and one LTA subunits or (less prevalent) two LTA and one LTB subunits.

It is found in the membrane. Its function is as follows. Cytokine that binds to LTBR/TNFRSF3. May play a specific role in immune response regulation. Provides the membrane anchor for the attachment of the heterotrimeric complex to the cell surface. This is Lymphotoxin-beta (LTB) from Sus scrofa (Pig).